A 159-amino-acid polypeptide reads, in one-letter code: Putative pre-16S rRNA nuclease (159 aa).

It belongs to the YqgF nuclease family.

The protein resides in the cytoplasm. In terms of biological role, could be a nuclease involved in processing of the 5'-end of pre-16S rRNA. The polypeptide is Putative pre-16S rRNA nuclease (Bartonella quintana (strain Toulouse) (Rochalimaea quintana)).